The primary structure comprises 885 residues: Leucine--tRNA ligase (885 aa).

The 'HIGH' region motif lies at 48 to 58 (PYPSGKLHMGH). The 'KMSKS' region signature appears at 639 to 643 (TMSKS). Lysine 642 is a binding site for ATP.

Belongs to the class-I aminoacyl-tRNA synthetase family.

It localises to the cytoplasm. The enzyme catalyses tRNA(Leu) + L-leucine + ATP = L-leucyl-tRNA(Leu) + AMP + diphosphate. The polypeptide is Leucine--tRNA ligase (Bordetella petrii (strain ATCC BAA-461 / DSM 12804 / CCUG 43448)).